Reading from the N-terminus, the 259-residue chain is 1-(5-phosphoribosyl)-5-[(5-phosphoribosylamino)methylideneamino] imidazole-4-carboxamide isomerase (259 aa).

D8 (proton acceptor) is an active-site residue. D129 serves as the catalytic Proton donor.

This sequence belongs to the HisA/HisF family.

Its subcellular location is the cytoplasm. The enzyme catalyses 1-(5-phospho-beta-D-ribosyl)-5-[(5-phospho-beta-D-ribosylamino)methylideneamino]imidazole-4-carboxamide = 5-[(5-phospho-1-deoxy-D-ribulos-1-ylimino)methylamino]-1-(5-phospho-beta-D-ribosyl)imidazole-4-carboxamide. The protein operates within amino-acid biosynthesis; L-histidine biosynthesis; L-histidine from 5-phospho-alpha-D-ribose 1-diphosphate: step 4/9. The chain is 1-(5-phosphoribosyl)-5-[(5-phosphoribosylamino)methylideneamino] imidazole-4-carboxamide isomerase from Pelotomaculum thermopropionicum (strain DSM 13744 / JCM 10971 / SI).